The chain runs to 417 residues: Serine hydroxymethyltransferase (417 aa).

Residues leucine 121 and 125 to 127 (GHL) contribute to the (6S)-5,6,7,8-tetrahydrofolate site. Position 230 is an N6-(pyridoxal phosphate)lysine (lysine 230). A (6S)-5,6,7,8-tetrahydrofolate-binding site is contributed by glutamate 245.

This sequence belongs to the SHMT family. As to quaternary structure, homodimer. It depends on pyridoxal 5'-phosphate as a cofactor.

The protein resides in the cytoplasm. It carries out the reaction (6R)-5,10-methylene-5,6,7,8-tetrahydrofolate + glycine + H2O = (6S)-5,6,7,8-tetrahydrofolate + L-serine. The protein operates within one-carbon metabolism; tetrahydrofolate interconversion. Its pathway is amino-acid biosynthesis; glycine biosynthesis; glycine from L-serine: step 1/1. Functionally, catalyzes the reversible interconversion of serine and glycine with tetrahydrofolate (THF) serving as the one-carbon carrier. This reaction serves as the major source of one-carbon groups required for the biosynthesis of purines, thymidylate, methionine, and other important biomolecules. Also exhibits THF-independent aldolase activity toward beta-hydroxyamino acids, producing glycine and aldehydes, via a retro-aldol mechanism. This is Serine hydroxymethyltransferase from Desulfitobacterium hafniense (strain DSM 10664 / DCB-2).